Reading from the N-terminus, the 242-residue chain is N-alpha-acetyltransferase 60 (242 aa).

Over 1 to 192 (MTDVVPTTAL…GGHPPWTIFD (192 aa)) the chain is Cytoplasmic. The region spanning 13–182 (IQLRLLCHDD…DGFTYVLYIN (170 aa)) is the N-acetyltransferase domain. Tyr-38 lines the substrate pocket. Residue Tyr-97 is part of the active site. Leu-99 contributes to the substrate binding site. Residues 101-103 (LGV) and 109-114 (KHGIGS) contribute to the acetyl-CoA site. Residue His-138 is part of the active site. Acetyl-CoA-binding positions include Asn-143 and 150–153 (YENR). Residues 162 to 173 (PYYYSIRGVLKD) are required for homodimerization. Position 165 (Tyr-165) interacts with substrate. An intramembrane region (helical) is located at residues 193–236 (YIHHIGSALASLSPCSIPQRIYRQAQNLLRSFLPWSGISSKSGI). Over 237 to 242 (EYSRTM) the chain is Cytoplasmic.

Belongs to the acetyltransferase family. NAA60 subfamily. Monomer and homodimer; monomer in presence of substrate and homodimer in its absence.

The protein resides in the golgi apparatus membrane. The catalysed reaction is N-terminal L-methionyl-[transmembrane protein] + acetyl-CoA = N-terminal N(alpha)-acetyl-L-methionyl-[transmembrane protein] + CoA + H(+). It carries out the reaction L-lysyl-[protein] + acetyl-CoA = N(6)-acetyl-L-lysyl-[protein] + CoA + H(+). Functionally, N-alpha-acetyltransferase that specifically mediates the acetylation of N-terminal residues of the transmembrane proteins, with a strong preference for N-termini facing the cytosol. Displays N-terminal acetyltransferase activity towards a range of N-terminal sequences including those starting with Met-Lys, Met-Val, Met-Ala and Met-Met. Required for normal chromosomal segregation during anaphase. May also show histone acetyltransferase activity; such results are however unclear in vivo and would require additional experimental evidences. The protein is N-alpha-acetyltransferase 60 (naa60) of Danio rerio (Zebrafish).